Here is a 418-residue protein sequence, read N- to C-terminus: S-adenosylmethionine synthase (418 aa).

ATP is bound at residue His-16. Position 18 (Asp-18) interacts with Mg(2+). Glu-44 lines the K(+) pocket. Positions 57 and 100 each coordinate L-methionine. Positions 100–110 are flexible loop; it reads QSPDIAQGVDS. ATP-binding positions include 174 to 176, Asp-259, 265 to 266, Ala-282, and Lys-286; these read DGK and RK. Residue Asp-259 coordinates L-methionine. Position 290 (Lys-290) interacts with L-methionine.

This sequence belongs to the AdoMet synthase family. As to quaternary structure, homotetramer; dimer of dimers. It depends on Mg(2+) as a cofactor. K(+) is required as a cofactor.

Its subcellular location is the cytoplasm. The catalysed reaction is L-methionine + ATP + H2O = S-adenosyl-L-methionine + phosphate + diphosphate. The protein operates within amino-acid biosynthesis; S-adenosyl-L-methionine biosynthesis; S-adenosyl-L-methionine from L-methionine: step 1/1. Its function is as follows. Catalyzes the formation of S-adenosylmethionine (AdoMet) from methionine and ATP. The overall synthetic reaction is composed of two sequential steps, AdoMet formation and the subsequent tripolyphosphate hydrolysis which occurs prior to release of AdoMet from the enzyme. This chain is S-adenosylmethionine synthase, found in Acaryochloris marina (strain MBIC 11017).